We begin with the raw amino-acid sequence, 432 residues long: Glutamyl-tRNA reductase (432 aa).

Substrate is bound by residues 49–52 (TCNR), Ser107, 112–114 (ETQ), and Gln118. Cys50 (nucleophile) is an active-site residue. 186 to 191 (GAGEMG) serves as a coordination point for NADP(+).

This sequence belongs to the glutamyl-tRNA reductase family. Homodimer.

The enzyme catalyses (S)-4-amino-5-oxopentanoate + tRNA(Glu) + NADP(+) = L-glutamyl-tRNA(Glu) + NADPH + H(+). The protein operates within porphyrin-containing compound metabolism; protoporphyrin-IX biosynthesis; 5-aminolevulinate from L-glutamyl-tRNA(Glu): step 1/2. Functionally, catalyzes the NADPH-dependent reduction of glutamyl-tRNA(Glu) to glutamate 1-semialdehyde (GSA). The chain is Glutamyl-tRNA reductase from Campylobacter jejuni subsp. jejuni serotype O:2 (strain ATCC 700819 / NCTC 11168).